A 1026-amino-acid polypeptide reads, in one-letter code: Maternal effect protein staufen (1026 aa).

Residues 16-29 (AAHHHSHSHAHMHL) show a composition bias toward basic residues. Disordered regions lie at residues 16 to 159 (AAHH…QLPP), 190 to 210 (NHYG…SNYA), and 234 to 311 (TPVP…KDKT). The segment covering 70 to 111 (AQQQQQQQTSSNQAGAVAAAGAAYHHGNINSNSGSNISSNSN) has biased composition (low complexity). Residues 112–126 (QMQKIRQQHQHLSSS) are compositionally biased toward polar residues. Low complexity-rich tracts occupy residues 192–210 (YGSN…SNYA) and 234–256 (TPVP…NSTV). Residues 267–284 (TSQKPETRQEPASADDHV) are compositionally biased toward basic and acidic residues. Polar residues predominate over residues 285 to 303 (STGNIDATGALSNEDTSSS). DRBM domains follow at residues 311-378 (TPMC…ETMY) and 490-557 (PKFP…VLKT). Phosphoserine occurs at positions 563 and 570. One can recognise a DRBM 3 domain in the interval 578-645 (SPISQVHEIG…AEKMLVELQK (68 aa)). Residues H606, K608, K628, K629, and K632 each contribute to the RNA site. The segment at 647–707 (PPLTPTKQTP…PPKDKLIDMD (61 aa)) is disordered. A phosphothreonine mark is found at T650 and T655. Phosphoserine is present on S676. The segment covering 678 to 688 (VSGTDGPTQTG) has biased composition (polar residues). A DRBM 4 domain is found at 711-781 (NPITKLIQLQ…AQALFELLEA (71 aa)). Residues 855 to 948 (ESKEEEANKE…SNSTSNTQSA (94 aa)) are disordered. The span at 864–890 (EVAVAAEENSNNSANSGDSSNSSSGDS) shows a compositional bias: low complexity. The span at 891–901 (QATEAASESAL) shows a compositional bias: polar residues. Composition is skewed to low complexity over residues 902-920 (NTST…SNVG) and 934-947 (NTES…NTQS). Residues 951–1018 (HMKEQLLYLS…ASNALKILSK (68 aa)) enclose the DRBM 5 domain.

Component of neuronal ribonucleoprotein complexes (RNPs) that contains at least various translational repressor and mRNA turnover proteins such as me31B, tral, Upf1, AGO2 and sometimes Fmr1. As to expression, polar granules at the posterior pole of the oocyte, and by the time the egg is laid, at the anterior pole.

The protein localises to the cytoplasm. It is found in the cytoplasmic ribonucleoprotein granule. In terms of biological role, RNA-binding protein which forms ribonucleoprotein complexes (RNPs) that play critical roles in the localization, translational repression and turnover of RNAs during embryogenesis, neurotransmission and neurogenesis. In the oocyte, essential for the localization of both the osk/oskar mRNA to the posterior pole and bcd/bicoid RNA to the anterior pole, and is therefore required for the correct anterior-posterior patterning of the developing embryo. Association with osk or bcd at their respective poles, appears to promote the formation and stabilization of the ribonucleoprotein complexes. Integral component of diverse neuritic ribonucleoprotein complexes (RNPs) that mediate the transport, translation and turnover of neuronal RNAs during neuorgenesis and the translation repression of synaptic transcripts in preparation for their dendritic targeting. This chain is Maternal effect protein staufen (stau), found in Drosophila melanogaster (Fruit fly).